Here is a 629-residue protein sequence, read N- to C-terminus: tRNA uridine 5-carboxymethylaminomethyl modification enzyme MnmG (629 aa).

Residues 13 to 18 (GGGHAG), valine 125, and serine 180 contribute to the FAD site. 273-287 (GPRYCPSIEDKVMRF) contributes to the NAD(+) binding site. Glutamine 370 is an FAD binding site.

This sequence belongs to the MnmG family. In terms of assembly, homodimer. Heterotetramer of two MnmE and two MnmG subunits. FAD is required as a cofactor.

The protein resides in the cytoplasm. NAD-binding protein involved in the addition of a carboxymethylaminomethyl (cmnm) group at the wobble position (U34) of certain tRNAs, forming tRNA-cmnm(5)s(2)U34. This is tRNA uridine 5-carboxymethylaminomethyl modification enzyme MnmG from Cronobacter sakazakii (strain ATCC BAA-894) (Enterobacter sakazakii).